The following is a 71-amino-acid chain: Equinin B (71 aa).

The N-terminal stretch at 1-11 (MAVIMVDQAEG) is a signal peptide. Residues 46-71 (GDEPQQMALDDESDPLVILPNNYNDY) constitute a propeptide that is removed on maturation.

In terms of processing, contains 4 disulfide bonds.

Its subcellular location is the secreted. It is found in the target cell membrane. Its function is as follows. Antimicrobial peptide with inhibitory activity against both Gram-positive and Gram-negative bacteria (E.coli (MIC=0.25 ug/ml), M.lysodeikticus (MIC=0.25 ug/ml), and V.alginolyticus (MIC=0.25 ug/ml)). Does not show hemolytic activity. This Actinia equina (Beadlet anemone) protein is Equinin B.